Consider the following 192-residue polypeptide: uncharacterized protein (192 aa).

Residues 29–160 (QRQAAVLIPV…PLDVYRRGNS (132 aa)) enclose the Nudix hydrolase domain. Residues 67–89 (GAVDSTDASLIAAALREAQEEVA) carry the Nudix box motif. E83 and E87 together coordinate Mg(2+).

It belongs to the Nudix hydrolase family. PCD1 subfamily. It depends on Mn(2+) as a cofactor. Mg(2+) is required as a cofactor.

Its function is as follows. Probably mediates the hydrolysis of some nucleoside diphosphate derivatives. This is an uncharacterized protein from Salmonella choleraesuis (strain SC-B67).